The following is a 190-amino-acid chain: GTP cyclohydrolase 1 (190 aa).

Zn(2+) contacts are provided by Cys75, His78, and Cys146.

Belongs to the GTP cyclohydrolase I family. As to quaternary structure, toroid-shaped homodecamer, composed of two pentamers of five dimers.

The catalysed reaction is GTP + H2O = 7,8-dihydroneopterin 3'-triphosphate + formate + H(+). The protein operates within cofactor biosynthesis; 7,8-dihydroneopterin triphosphate biosynthesis; 7,8-dihydroneopterin triphosphate from GTP: step 1/1. The protein is GTP cyclohydrolase 1 of Campylobacter jejuni subsp. jejuni serotype O:23/36 (strain 81-176).